The following is a 341-amino-acid chain: Phosphate acyltransferase (341 aa).

The protein belongs to the PlsX family. Homodimer. Probably interacts with PlsY.

Its subcellular location is the cytoplasm. The catalysed reaction is a fatty acyl-[ACP] + phosphate = an acyl phosphate + holo-[ACP]. The protein operates within lipid metabolism; phospholipid metabolism. In terms of biological role, catalyzes the reversible formation of acyl-phosphate (acyl-PO(4)) from acyl-[acyl-carrier-protein] (acyl-ACP). This enzyme utilizes acyl-ACP as fatty acyl donor, but not acyl-CoA. In Ehrlichia ruminantium (strain Gardel), this protein is Phosphate acyltransferase.